The chain runs to 574 residues: 4-oxocyclohexanecarboxylate 2-dehydrogenase (574 aa).

Belongs to the FAD-dependent oxidoreductase 2 family. In terms of assembly, monomer. Homodimer. FAD is required as a cofactor.

It carries out the reaction 4-oxocyclohexane-1-carboxylate + O2 = 4-oxocyclohex-2-ene-1-carboxylate + H2O2. Its activity is regulated as follows. Inhibited by 5,5'-dithio-bis(2- nitrobenzoate) and N-bromosuccinimide, but not by thiol and chelating reagents. Its function is as follows. Desaturase involved in a cyclohexanecarboxylate (CHCA) degradation pathway. Catalyzes the conversion of 4-oxocyclohexanecarboxylate (4-oxoCHCA) to 4-oxocyclohexenecarboxylate. Is highly specific for 4-oxocyclohexanecarboxylic acid and shows only slight activity with 4-oxo-2-methylcyclohex-2-enecarboxylic acid. The chain is 4-oxocyclohexanecarboxylate 2-dehydrogenase from Sinomonas cyclohexanicum (Corynebacterium cyclohexanicum).